Reading from the N-terminus, the 289-residue chain is ATP synthase subunit a (289 aa).

A run of 6 helical transmembrane segments spans residues 43 to 63, 103 to 123, 160 to 180, 193 to 213, 232 to 252, and 259 to 279; these read AFHV…VLLF, VIAP…AVDL, FSVF…GGFI, IFVQ…TLIA, VFIL…GLGV, and AVFH…LTIV.

Belongs to the ATPase A chain family. In terms of assembly, F-type ATPases have 2 components, CF(1) - the catalytic core - and CF(0) - the membrane proton channel. CF(1) has five subunits: alpha(3), beta(3), gamma(1), delta(1), epsilon(1). CF(0) has three main subunits: a(1), b(2) and c(9-12). The alpha and beta chains form an alternating ring which encloses part of the gamma chain. CF(1) is attached to CF(0) by a central stalk formed by the gamma and epsilon chains, while a peripheral stalk is formed by the delta and b chains.

The protein localises to the cell inner membrane. In terms of biological role, key component of the proton channel; it plays a direct role in the translocation of protons across the membrane. The polypeptide is ATP synthase subunit a (Pseudomonas fluorescens (strain Pf0-1)).